The sequence spans 354 residues: Holliday junction branch migration complex subunit RuvB (354 aa).

Residues 1-22 form a disordered region; sequence MTIQTDDFAPAPPRVVSAAPAS. A large ATPase domain (RuvB-L) region spans residues 5–193; the sequence is TDDFAPAPPR…FGIVARLEFY (189 aa). Residues Leu32, Arg33, Gly74, Lys77, Thr78, Thr79, 140–142, Arg183, Tyr193, and Arg230 each bind ATP; that span reads EDY. Residue Thr78 participates in Mg(2+) binding. The small ATPAse domain (RuvB-S) stretch occupies residues 194-264; that stretch reads TPEELALIVR…IAHKALVMLD (71 aa). The segment at 267 to 354 is head domain (RuvB-H); that stretch reads PQGFDLMDRK…RSDGQDLFGI (88 aa). DNA is bound by residues Arg303, Arg322, and Arg327.

Belongs to the RuvB family. Homohexamer. Forms an RuvA(8)-RuvB(12)-Holliday junction (HJ) complex. HJ DNA is sandwiched between 2 RuvA tetramers; dsDNA enters through RuvA and exits via RuvB. An RuvB hexamer assembles on each DNA strand where it exits the tetramer. Each RuvB hexamer is contacted by two RuvA subunits (via domain III) on 2 adjacent RuvB subunits; this complex drives branch migration. In the full resolvosome a probable DNA-RuvA(4)-RuvB(12)-RuvC(2) complex forms which resolves the HJ.

It is found in the cytoplasm. It carries out the reaction ATP + H2O = ADP + phosphate + H(+). In terms of biological role, the RuvA-RuvB-RuvC complex processes Holliday junction (HJ) DNA during genetic recombination and DNA repair, while the RuvA-RuvB complex plays an important role in the rescue of blocked DNA replication forks via replication fork reversal (RFR). RuvA specifically binds to HJ cruciform DNA, conferring on it an open structure. The RuvB hexamer acts as an ATP-dependent pump, pulling dsDNA into and through the RuvAB complex. RuvB forms 2 homohexamers on either side of HJ DNA bound by 1 or 2 RuvA tetramers; 4 subunits per hexamer contact DNA at a time. Coordinated motions by a converter formed by DNA-disengaged RuvB subunits stimulates ATP hydrolysis and nucleotide exchange. Immobilization of the converter enables RuvB to convert the ATP-contained energy into a lever motion, pulling 2 nucleotides of DNA out of the RuvA tetramer per ATP hydrolyzed, thus driving DNA branch migration. The RuvB motors rotate together with the DNA substrate, which together with the progressing nucleotide cycle form the mechanistic basis for DNA recombination by continuous HJ branch migration. Branch migration allows RuvC to scan DNA until it finds its consensus sequence, where it cleaves and resolves cruciform DNA. In Variovorax paradoxus (strain S110), this protein is Holliday junction branch migration complex subunit RuvB.